We begin with the raw amino-acid sequence, 250 residues long: ATP synthase subunit a (250 aa).

The next 6 membrane-spanning stretches (helical) occupy residues 26–46, 84–104, 114–134, 143–163, 193–213, and 216–236; these read FTNA…FLYL, FFPM…LGMV, IIVT…YGFY, LFVP…IEII, FVAS…LPLI, and VALT…FAVL.

The protein belongs to the ATPase A chain family. F-type ATPases have 2 components, CF(1) - the catalytic core - and CF(0) - the membrane proton channel. CF(1) has five subunits: alpha(3), beta(3), gamma(1), delta(1), epsilon(1). CF(0) has three main subunits: a(1), b(2) and c(9-12). The alpha and beta chains form an alternating ring which encloses part of the gamma chain. CF(1) is attached to CF(0) by a central stalk formed by the gamma and epsilon chains, while a peripheral stalk is formed by the delta and b chains.

The protein resides in the cell inner membrane. Its function is as follows. Key component of the proton channel; it plays a direct role in the translocation of protons across the membrane. This Sinorhizobium medicae (strain WSM419) (Ensifer medicae) protein is ATP synthase subunit a.